A 295-amino-acid chain; its full sequence is UDP-N-acetylenolpyruvoylglucosamine reductase (295 aa).

The region spanning 26–189 (VGGRADILFK…VEAEFKGVNS (164 aa)) is the FAD-binding PCMH-type domain. Arginine 169 is a catalytic residue. Residue cysteine 218 is the Proton donor of the active site. Glutamate 288 is an active-site residue.

This sequence belongs to the MurB family. Requires FAD as cofactor.

It localises to the cytoplasm. The catalysed reaction is UDP-N-acetyl-alpha-D-muramate + NADP(+) = UDP-N-acetyl-3-O-(1-carboxyvinyl)-alpha-D-glucosamine + NADPH + H(+). The protein operates within cell wall biogenesis; peptidoglycan biosynthesis. Cell wall formation. The sequence is that of UDP-N-acetylenolpyruvoylglucosamine reductase from Wolbachia sp. subsp. Drosophila simulans (strain wRi).